Consider the following 144-residue polypeptide: MKILVINGPNINFLGIREKEIYGEGTYEDLCKFIKDEGSKIGIEVEVMQSNIEGEIINFLQAAYNKVDGIVINPGAYTHYSIAIYDAIKSINIPTVEVHISNIHTREEYRRKSVTAPACIGQICGFGFYGYVMGITALKNMLSK.

Tyr-22 serves as the catalytic Proton acceptor. Asn-73, His-79, and Asp-86 together coordinate substrate. His-99 (proton donor) is an active-site residue. Residues 100–101 and Arg-110 contribute to the substrate site; that span reads IS.

It belongs to the type-II 3-dehydroquinase family. Homododecamer.

The catalysed reaction is 3-dehydroquinate = 3-dehydroshikimate + H2O. It participates in metabolic intermediate biosynthesis; chorismate biosynthesis; chorismate from D-erythrose 4-phosphate and phosphoenolpyruvate: step 3/7. In terms of biological role, catalyzes a trans-dehydration via an enolate intermediate. This Clostridium acetobutylicum (strain ATCC 824 / DSM 792 / JCM 1419 / IAM 19013 / LMG 5710 / NBRC 13948 / NRRL B-527 / VKM B-1787 / 2291 / W) protein is 3-dehydroquinate dehydratase.